The primary structure comprises 427 residues: Kallistatin (427 aa).

The signal sequence occupies residues 1 to 20; that stretch reads MHLIDYLLLLLVGLLALSHG. N-linked (GlcNAc...) asparagine glycans are attached at residues Asn33, Asn108, and Asn157. N-linked (GlcNAc...) (complex) asparagine glycosylation occurs at Asn238.

Belongs to the serpin family. Monomer and some homodimers. The N-terminus is blocked. Expressed by the liver and secreted in plasma.

It is found in the secreted. Inhibits human amidolytic and kininogenase activities of tissue kallikrein. Inhibition is achieved by formation of an equimolar, heat- and SDS-stable complex between the inhibitor and the enzyme, and generation of a small C-terminal fragment of the inhibitor due to cleavage at the reactive site by tissue kallikrein. The polypeptide is Kallistatin (SERPINA4) (Homo sapiens (Human)).